Here is a 443-residue protein sequence, read N- to C-terminus: Thymidine phosphorylase (443 aa).

It belongs to the thymidine/pyrimidine-nucleoside phosphorylase family. As to quaternary structure, homodimer.

It carries out the reaction thymidine + phosphate = 2-deoxy-alpha-D-ribose 1-phosphate + thymine. It participates in pyrimidine metabolism; dTMP biosynthesis via salvage pathway; dTMP from thymine: step 1/2. The enzymes which catalyze the reversible phosphorolysis of pyrimidine nucleosides are involved in the degradation of these compounds and in their utilization as carbon and energy sources, or in the rescue of pyrimidine bases for nucleotide synthesis. This Photobacterium profundum (strain SS9) protein is Thymidine phosphorylase.